Reading from the N-terminus, the 200-residue chain is Recombination protein RecR (200 aa).

Residues 57-72 (CQHCRTFTENSLCDIC) form a C4-type zinc finger. A Toprim domain is found at 81-176 (GQLCIVETPA…NITRIAHGVP (96 aa)).

This sequence belongs to the RecR family.

May play a role in DNA repair. It seems to be involved in an RecBC-independent recombinational process of DNA repair. It may act with RecF and RecO. The chain is Recombination protein RecR from Tolumonas auensis (strain DSM 9187 / NBRC 110442 / TA 4).